The chain runs to 58 residues: Large ribosomal subunit protein uL30 (58 aa).

This sequence belongs to the universal ribosomal protein uL30 family. Part of the 50S ribosomal subunit.

The chain is Large ribosomal subunit protein uL30 from Pseudomonas entomophila (strain L48).